Consider the following 925-residue polypeptide: Neuropilin-2 (925 aa).

A signal peptide spans 1–22 (MDMFPLTWIFLALYFSGHKVRS). At 23 to 858 (QQDPPCGGRL…EKSWLYTLDP (836 aa)) the chain is on the extracellular side. Cystine bridges form between Cys-28/Cys-55, Cys-83/Cys-105, and Cys-149/Cys-175. 2 CUB domains span residues 28–142 (CGGR…YEIF) and 149–267 (CSKN…YYLV). N-linked (GlcNAc...) asparagine glycans are attached at residues Asn-152 and Asn-157. Ca(2+) contacts are provided by Glu-197, Asp-211, and Asp-252. The cysteines at positions 208 and 230 are disulfide-linked. 2 disulfide bridges follow: Cys-277/Cys-427 and Cys-434/Cys-592. 2 F5/8 type C domains span residues 277-427 (CNAP…LFGC) and 434-592 (CSNM…VLGC). Residues 297 to 310 (STFSDGRWTPQQSR) show a composition bias toward polar residues. The interval 297-317 (STFSDGRWTPQQSRLHGDDNG) is disordered. The segment at 601–621 (VETLGPTVKSEETTTPYPMDE) is disordered. The N-linked (GlcNAc...) asparagine glycan is linked to Asn-629. The MAM domain occupies 642–802 (SGFNCNFDFP…TDVPLENCME (161 aa)). Residues 820–830 (YEDEIDDDYEG) are compositionally biased toward acidic residues. The segment at 820–849 (YEDEIDDDYEGDWNNSSSTSGAGSPSSGKE) is disordered. N-linked (GlcNAc...) asparagine glycosylation is found at Asn-833 and Asn-834. Positions 835 to 846 (SSSTSGAGSPSS) are enriched in low complexity. A helical membrane pass occupies residues 859 to 883 (ILITIIAMSSLGVLLGATCAGLLLY). Topologically, residues 884-925 (CTCSYSGLSSRSCTTLENYNFELYDGLKHKVKINHQKCCSEA) are cytoplasmic.

The protein belongs to the neuropilin family. Heterodimer with NRP1. Binds PLXNB1. In terms of tissue distribution, found in certain neuronal populations of the CNS, including dorsal root ganglia, and in other non-neuronal tissues including mesenchymal tissue lining in the ribs.

Its subcellular location is the membrane. Its function is as follows. High affinity receptor for semaphorins 3C, 3F, VEGF-165 and VEGF-145 isoforms of VEGF, and the PLGF-2 isoform of PGF. This chain is Neuropilin-2 (Nrp2), found in Rattus norvegicus (Rat).